A 739-amino-acid chain; its full sequence is Polyribonucleotide nucleotidyltransferase (739 aa).

Mg(2+) contacts are provided by Asp514 and Asp520. Residues 580–639 enclose the KH domain; sequence PRIITVKIPVDKIGEVIGPKGKMINQIQEDTGADITIEDDGTIYIGAAQGSQAEAARATI. Residues 651–723 enclose the S1 motif domain; sequence GERYLGTVVK…SRGKLSLIPV (73 aa).

This sequence belongs to the polyribonucleotide nucleotidyltransferase family. It depends on Mg(2+) as a cofactor.

It is found in the cytoplasm. It catalyses the reaction RNA(n+1) + phosphate = RNA(n) + a ribonucleoside 5'-diphosphate. In terms of biological role, involved in mRNA degradation. Catalyzes the phosphorolysis of single-stranded polyribonucleotides processively in the 3'- to 5'-direction. The chain is Polyribonucleotide nucleotidyltransferase from Streptomyces coelicolor (strain ATCC BAA-471 / A3(2) / M145).